We begin with the raw amino-acid sequence, 97 residues long: UPF0416 protein RC0826 (97 aa).

Positions 1–33 (MRIFVKAAISTAAWRFYAHPTVAMGICVGTALA) are cleaved as a signal peptide.

The protein belongs to the UPF0416 family.

The chain is UPF0416 protein RC0826 from Rickettsia conorii (strain ATCC VR-613 / Malish 7).